The chain runs to 351 residues: UDP-3-O-acylglucosamine N-acyltransferase (351 aa).

His-257 serves as the catalytic Proton acceptor.

The protein belongs to the transferase hexapeptide repeat family. LpxD subfamily. As to quaternary structure, homotrimer.

The catalysed reaction is a UDP-3-O-[(3R)-3-hydroxyacyl]-alpha-D-glucosamine + a (3R)-hydroxyacyl-[ACP] = a UDP-2-N,3-O-bis[(3R)-3-hydroxyacyl]-alpha-D-glucosamine + holo-[ACP] + H(+). The protein operates within bacterial outer membrane biogenesis; LPS lipid A biosynthesis. Its function is as follows. Catalyzes the N-acylation of UDP-3-O-acylglucosamine using 3-hydroxyacyl-ACP as the acyl donor. Is involved in the biosynthesis of lipid A, a phosphorylated glycolipid that anchors the lipopolysaccharide to the outer membrane of the cell. This chain is UDP-3-O-acylglucosamine N-acyltransferase, found in Methylorubrum populi (strain ATCC BAA-705 / NCIMB 13946 / BJ001) (Methylobacterium populi).